Consider the following 76-residue polypeptide: Kappa-actitoxin-Avd4a (76 aa).

The signal sequence occupies residues 1–19; that stretch reads MNKALFLCLVVLCAAVVFA. The propeptide occupies 20–31; that stretch reads AEDLQKAKHAPF. Disulfide bonds link Cys37-Cys72, Cys39-Cys65, and Cys55-Cys73.

Belongs to the sea anemone type 3 (BDS) potassium channel toxin family. As to expression, highly expressed in the ectodermal tissue from the distal and proximal tentacles, body wall, and oral disk.

Its subcellular location is the secreted. The protein resides in the nematocyst. Functionally, acts as a gating modifier on both Kv and Nav ion channels, and also acts on blood pressure. Voltage-dependently inhibits voltage-gated potassium channels Kv3 (Kv3.1/KCNC1, Kv3.2/KCNC2 and Kv3.4/KCNC4) and slows inactivation of the voltage-gated sodium channel Nav1.7/SCN9A. Inhibits all Kv3.1, Kv3.2 and Kv3.4 by about 50% when tested at a voltage of +40 mV (45%, 48% and 56%, respectively). May act by binding residues in voltage-sensing domains S3b and S4 of Kv3. On sodium channels, tests have been done on human Nav1.7/SCN9A (expressed in HEK293 cells) (EC(50)=3 nM) and rat SCG neurons that mostly carry Nav1.7 channels (EC(50)=300 nM). This toxin also reduces blood pressure. This Anemonia viridis (Snakelocks anemone) protein is Kappa-actitoxin-Avd4a.